The primary structure comprises 281 residues: Probable endonuclease 4 (281 aa).

Positions 69, 109, 145, 179, 182, 216, 229, 231, and 261 each coordinate Zn(2+).

It belongs to the AP endonuclease 2 family. Zn(2+) is required as a cofactor.

The catalysed reaction is Endonucleolytic cleavage to 5'-phosphooligonucleotide end-products.. Functionally, endonuclease IV plays a role in DNA repair. It cleaves phosphodiester bonds at apurinic or apyrimidinic (AP) sites, generating a 3'-hydroxyl group and a 5'-terminal sugar phosphate. The sequence is that of Probable endonuclease 4 from Glaesserella parasuis serovar 5 (strain SH0165) (Haemophilus parasuis).